The primary structure comprises 447 residues: Chromosomal replication initiator protein DnaA (447 aa).

Positions 1 to 74 (MENIEELWSA…MLLEVTGSEL (74 aa)) are domain I, interacts with DnaA modulators. The segment at 74–108 (LNTKFIIPDSLEEIEEQKPMPKPKQSTDTGDSPKS) is domain II. Residues 85 to 107 (EEIEEQKPMPKPKQSTDTGDSPK) are disordered. The segment covering 97–107 (KQSTDTGDSPK) has biased composition (polar residues). The interval 109–325 (MLNSKYTFDT…GALIRVVAYS (217 aa)) is domain III, AAA+ region. ATP is bound by residues Gly153, Gly155, Lys156, and Thr157. The tract at residues 326 to 447 (SLVNQDIDAS…EELKEKLKSI (122 aa)) is domain IV, binds dsDNA.

This sequence belongs to the DnaA family. Oligomerizes as a right-handed, spiral filament on DNA at oriC.

It is found in the cytoplasm. In terms of biological role, plays an essential role in the initiation and regulation of chromosomal replication. ATP-DnaA binds to the origin of replication (oriC) to initiate formation of the DNA replication initiation complex once per cell cycle. Binds the DnaA box (a 9 base pair repeat at the origin) and separates the double-stranded (ds)DNA. Forms a right-handed helical filament on oriC DNA; dsDNA binds to the exterior of the filament while single-stranded (ss)DNA is stabiized in the filament's interior. The ATP-DnaA-oriC complex binds and stabilizes one strand of the AT-rich DNA unwinding element (DUE), permitting loading of DNA polymerase. After initiation quickly degrades to an ADP-DnaA complex that is not apt for DNA replication. Binds acidic phospholipids. This chain is Chromosomal replication initiator protein DnaA, found in Oceanobacillus iheyensis (strain DSM 14371 / CIP 107618 / JCM 11309 / KCTC 3954 / HTE831).